The primary structure comprises 376 residues: Nucleoside diphosphate kinase homolog 7 (376 aa).

Residues 3 to 91 (HSERFVFIAE…YTARQLGSRK (89 aa)) form the DM10 domain.

This sequence belongs to the NDK family. In terms of assembly, component of sperm flagellar doublet microtubules. Component of the gamma-tubulin ring complex. Post-translationally, undergoes autophosphorylation. Expressed in airway epithelial cells.

It is found in the cytoplasm. Its subcellular location is the cytoskeleton. The protein resides in the microtubule organizing center. The protein localises to the centrosome. It localises to the nucleus. It is found in the spindle. Its subcellular location is the cilium axoneme. The protein resides in the flagellum axoneme. The protein localises to the cell projection. It localises to the cilium. Possesses an intrinsic kinase activity. Displays 3'-5' exonuclease activity with a preference for single-stranded DNA. Does not seem to have nucleoside diphosphate kinase activity. Functional component of the gamma-tubulin ring complex, implicated in the regulation of the microtubule-nucleating activity of the gamma-tubulin ring complex in centrosomes, in a kinase activity-dependent manner. Part of the dynein-decorated doublet microtubules (DMTs) in cilia axoneme, which is required for motile cilia beating. The polypeptide is Nucleoside diphosphate kinase homolog 7 (Homo sapiens (Human)).